The following is a 297-amino-acid chain: Pantothenate synthetase (297 aa).

Residue 30-37 coordinates ATP; that stretch reads MGYLHAGH. His-37 acts as the Proton donor in catalysis. Gln-61 lines the (R)-pantoate pocket. A beta-alanine-binding site is contributed by Gln-61. ATP is bound at residue 147-150; it reads GEKD. Gln-153 contacts (R)-pantoate. Residues Val-176 and 184 to 187 each bind ATP; that span reads LSSR.

It belongs to the pantothenate synthetase family. Homodimer.

It localises to the cytoplasm. The enzyme catalyses (R)-pantoate + beta-alanine + ATP = (R)-pantothenate + AMP + diphosphate + H(+). It functions in the pathway cofactor biosynthesis; (R)-pantothenate biosynthesis; (R)-pantothenate from (R)-pantoate and beta-alanine: step 1/1. Its function is as follows. Catalyzes the condensation of pantoate with beta-alanine in an ATP-dependent reaction via a pantoyl-adenylate intermediate. The polypeptide is Pantothenate synthetase (Rhizobium etli (strain ATCC 51251 / DSM 11541 / JCM 21823 / NBRC 15573 / CFN 42)).